A 587-amino-acid polypeptide reads, in one-letter code: Tyrosine-protein kinase transforming protein Src (587 aa).

The segment at 1–58 (MGSSKSKPKDPSQRRRSLEPPDSTHHGGFPASQTPNKTAAPDTHRTPSRSFGTVATEP) is disordered. G2 carries N-myristoyl glycine; by host lipidation. Residues 7–25 (KPKDPSQRRRSLEPPDSTH) are compositionally biased toward basic and acidic residues. Residues 81–142 (GGVTTFVALY…PSNYVAPSDS (62 aa)) form the SH3 domain. Positions 148–245 (WYFGKITRRE…GLCHRLTNVC (98 aa)) constitute an SH2 domain. In terms of domain architecture, Protein kinase spans 267–520 (LRLEVKLGQG…YLQAFLEDYF (254 aa)). Residues 273-281 (LGQGCFGEV) and K295 contribute to the ATP site. D386 (proton acceptor) is an active-site residue. Y416 is subject to Phosphotyrosine; by autocatalysis.

Belongs to the protein kinase superfamily. Tyr protein kinase family. SRC subfamily. Post-translationally, the phosphorylated form is termed pp60v-src.

It carries out the reaction L-tyrosyl-[protein] + ATP = O-phospho-L-tyrosyl-[protein] + ADP + H(+). Functionally, this phosphoprotein, required for both the initiation and the maintenance of neoplastic transformation, is a protein kinase that catalyzes the phosphorylation of tyrosine residues in vitro. This chain is Tyrosine-protein kinase transforming protein Src (V-SRC), found in Galliformes.